A 306-amino-acid chain; its full sequence is D-alanine--D-alanine ligase (306 aa).

The 196-residue stretch at 106-301 (KLLWQSAGIN…FEELVLKILG (196 aa)) folds into the ATP-grasp domain. Position 132-187 (132-187 (AKELGLPLIVKPSREGSTIGLSKVREAGEVAAAWHLAARHDAMVLAEQFIEGTELT)) interacts with ATP. Mg(2+)-binding residues include Asp255, Glu268, and Asn270.

It belongs to the D-alanine--D-alanine ligase family. Mg(2+) serves as cofactor. Requires Mn(2+) as cofactor.

The protein localises to the cytoplasm. The enzyme catalyses 2 D-alanine + ATP = D-alanyl-D-alanine + ADP + phosphate + H(+). The protein operates within cell wall biogenesis; peptidoglycan biosynthesis. Functionally, cell wall formation. In Nitrosospira multiformis (strain ATCC 25196 / NCIMB 11849 / C 71), this protein is D-alanine--D-alanine ligase.